A 281-amino-acid chain; its full sequence is Voltage-dependent L-type calcium channel subunit alpha-1S (281 aa).

Residues 1–8 (VGFVIVTF) form an III repeat. Residues 1–17 (VGFVIVTFQEQGESEYK) form a dihydropyridine binding region. Residues 45 to 281 (NPYQYQIWYV…TCGTGFAYFY (237 aa)) form an IV repeat. A helical transmembrane segment spans residues 59-80 (YFEYLMFFLIMLNTICLGMQHY). Asn81 is a glycosylation site (N-linked (GlcNAc...) asparagine). A helical transmembrane segment spans residues 89–110 (VSDILNVAFTVLFTLEMILKLM). The chain crosses the membrane as a helical span at residues 121-140 (PWNVFDFLIVIGSIIDVILS). Residues 153-171 (ITFFRLFRVMRLVKLLSRG) form a helical membrane-spanning segment. Residues 190-210 (YVALLIVMLFFIYAVIGMQMF) traverse the membrane as a helical segment. The segment at residues 233–251 (AVLLLFRCATGEAWQEILL) is an intramembrane region (pore-forming). A Selectivity filter of repeat IV motif is present at residues 242–245 (TGEA). The segment at 258-281 (RCDPESDYAEGEEYTCGTGFAYFY) is dihydropyridine binding. A disulfide bond links Cys259 and Cys273. The phenylalkylamine binding stretch occupies residues 270–281 (EYTCGTGFAYFY).

This sequence belongs to the calcium channel alpha-1 subunit (TC 1.A.1.11) family. CACNA1S subfamily. In terms of assembly, component of a calcium channel complex consisting of a pore-forming alpha subunit (CACNA1S) and the ancillary subunits CACNB1 or CACNB2, CACNG1 and CACNA2D1. The channel complex contains alpha, beta, gamma and delta subunits in a 1:1:1:1 ratio, i.e. it contains either CACNB1 or CACNB2. CACNA1S channel activity is modulated by the auxiliary subunits (CACNB1 or CACNB2, CACNG1 and CACNA2D1). Interacts with DYSF and JSRP1. Interacts with RYR1. Interacts with CALM. In terms of processing, the alpha-1S subunit is found in two isoforms in the skeletal muscle: a minor form of 212 kDa containing the complete amino acid sequence, and a major form of 190 kDa derived from the full-length form by post-translational proteolysis close to Phe-1690. Post-translationally, both the minor and major forms are phosphorylated in vitro by PKA. Phosphorylation by PKA activates the calcium channel.

The protein resides in the cell membrane. Its subcellular location is the sarcolemma. The protein localises to the T-tubule. The enzyme catalyses Ca(2+)(in) = Ca(2+)(out). Channel activity is blocked by dihydropyridines (DHP), phenylalkylamines, and by benzothiazepines. Its function is as follows. Pore-forming, alpha-1S subunit of the voltage-gated calcium channel that gives rise to L-type calcium currents in skeletal muscle. Calcium channels containing the alpha-1S subunit play an important role in excitation-contraction coupling in skeletal muscle via their interaction with RYR1, which triggers Ca(2+) release from the sarcplasmic reticulum and ultimately results in muscle contraction. Long-lasting (L-type) calcium channels belong to the 'high-voltage activated' (HVA) group. The polypeptide is Voltage-dependent L-type calcium channel subunit alpha-1S (CACNA1S) (Gallus gallus (Chicken)).